The chain runs to 196 residues: Large ribosomal subunit protein bL9c (196 aa).

The transit peptide at 1–41 directs the protein to the chloroplast; it reads MASTTSTLSLSWSNSFHSFAGAISEPQKSPENCRVMLPIVA.

In terms of assembly, component of the chloroplast large ribosomal subunit (LSU). Mature 70S chloroplast ribosomes of higher plants consist of a small (30S) and a large (50S) subunit. The 30S small subunit contains 1 molecule of ribosomal RNA (16S rRNA) and 24 different proteins. The 50S large subunit contains 3 rRNA molecules (23S, 5S and 4.5S rRNA) and 33 different proteins.

Its subcellular location is the plastid. The protein localises to the chloroplast. Functionally, component of the chloroplast ribosome (chloro-ribosome), a dedicated translation machinery responsible for the synthesis of chloroplast genome-encoded proteins, including proteins of the transcription and translation machinery and components of the photosynthetic apparatus. This chain is Large ribosomal subunit protein bL9c (RPL9), found in Spinacia oleracea (Spinach).